The chain runs to 324 residues: Autolytic lysozyme (324 aa).

Active-site residues include D5 and E91. Tandem repeats lie at residues 212-234, 235-254, 255-277, 278-300, and 301-324. A 5 X 23 AA tandem repeats region spans residues 212–324; that stretch reads LLKRGLEVDG…ATWSKLLDEN (113 aa).

Belongs to the glycosyl hydrolase 25 family. As to quaternary structure, monomer.

It is found in the secreted. The protein localises to the cytoplasm. The enzyme catalyses Hydrolysis of (1-&gt;4)-beta-linkages between N-acetylmuramic acid and N-acetyl-D-glucosamine residues in a peptidoglycan and between N-acetyl-D-glucosamine residues in chitodextrins.. The sequence is that of Autolytic lysozyme (lyc) from Clostridium acetobutylicum (strain ATCC 824 / DSM 792 / JCM 1419 / IAM 19013 / LMG 5710 / NBRC 13948 / NRRL B-527 / VKM B-1787 / 2291 / W).